A 227-amino-acid chain; its full sequence is Urease accessory protein UreF (227 aa).

The protein belongs to the UreF family. UreD, UreF and UreG form a complex that acts as a GTP-hydrolysis-dependent molecular chaperone, activating the urease apoprotein by helping to assemble the nickel containing metallocenter of UreC. The UreE protein probably delivers the nickel.

It localises to the cytoplasm. Required for maturation of urease via the functional incorporation of the urease nickel metallocenter. The polypeptide is Urease accessory protein UreF (Blochmanniella floridana).